The chain runs to 228 residues: Growth arrest-specific protein 1 homolog (228 aa).

The N-terminal stretch at M1–A17 is a signal peptide. N-linked (GlcNAc...) asparagine glycosylation is found at N143 and N156. D205 carries GPI-anchor amidated aspartate lipidation. Positions S206 to F228 are cleaved as a propeptide — removed in mature form.

In terms of tissue distribution, pharynx muscle cells from its early formation, in the two-fold embryo, until the adult stage.

Its subcellular location is the cell membrane. In terms of biological role, role in pharynx function or development. This chain is Growth arrest-specific protein 1 homolog (phg-1), found in Caenorhabditis elegans.